An 88-amino-acid chain; its full sequence is Translation initiation factor IF-1 1 (88 aa).

The 72-residue stretch at 1 to 72 (MSKEDMIELE…TKGRINFRHP (72 aa)) folds into the S1-like domain. The interval 66–88 (RINFRHPTANPGAGPRPSHHHRR) is disordered.

It belongs to the IF-1 family. Component of the 30S ribosomal translation pre-initiation complex which assembles on the 30S ribosome in the order IF-2 and IF-3, IF-1 and N-formylmethionyl-tRNA(fMet); mRNA recruitment can occur at any time during PIC assembly.

Its subcellular location is the cytoplasm. One of the essential components for the initiation of protein synthesis. Stabilizes the binding of IF-2 and IF-3 on the 30S subunit to which N-formylmethionyl-tRNA(fMet) subsequently binds. Helps modulate mRNA selection, yielding the 30S pre-initiation complex (PIC). Upon addition of the 50S ribosomal subunit IF-1, IF-2 and IF-3 are released leaving the mature 70S translation initiation complex. In Chromobacterium violaceum (strain ATCC 12472 / DSM 30191 / JCM 1249 / CCUG 213 / NBRC 12614 / NCIMB 9131 / NCTC 9757 / MK), this protein is Translation initiation factor IF-1 1.